We begin with the raw amino-acid sequence, 71 residues long: Small, acid-soluble spore protein 2 (71 aa).

Belongs to the alpha/beta-type SASP family.

SASP are bound to spore DNA. They are double-stranded DNA-binding proteins that cause DNA to change to an a-like conformation. They protect the DNA backbone from chemical and enzymatic cleavage and are thus involved in dormant spore's high resistance to UV light. The sequence is that of Small, acid-soluble spore protein 2 from Bacillus subtilis.